Reading from the N-terminus, the 331-residue chain is NADH-quinone oxidoreductase subunit H (331 aa).

A run of 8 helical transmembrane segments spans residues 13–33 (FLIS…VLTL), 80–100 (WVFL…WLVI), 113–133 (IGLV…IMAG), 159–179 (LILS…VDIV), 183–203 (AGGF…AFFV), 249–269 (VMSA…LPFL), 273–293 (VFNW…FQWI), and 311–331 (KILV…MLVI).

It belongs to the complex I subunit 1 family. As to quaternary structure, NDH-1 is composed of 14 different subunits. Subunits NuoA, H, J, K, L, M, N constitute the membrane sector of the complex.

Its subcellular location is the cell membrane. The catalysed reaction is a quinone + NADH + 5 H(+)(in) = a quinol + NAD(+) + 4 H(+)(out). NDH-1 shuttles electrons from NADH, via FMN and iron-sulfur (Fe-S) centers, to quinones in the respiratory chain. The immediate electron acceptor for the enzyme in this species is believed to be ubiquinone. Couples the redox reaction to proton translocation (for every two electrons transferred, four hydrogen ions are translocated across the cytoplasmic membrane), and thus conserves the redox energy in a proton gradient. This subunit may bind ubiquinone. The chain is NADH-quinone oxidoreductase subunit H from Rubrobacter xylanophilus (strain DSM 9941 / JCM 11954 / NBRC 16129 / PRD-1).